We begin with the raw amino-acid sequence, 354 residues long: NADH-ubiquinone oxidoreductase chain 2 (354 aa).

The next 10 membrane-spanning stretches (helical) occupy residues 5-25, 26-46, 60-80, 96-116, 122-142, 149-169, 198-218, 242-262, 274-294, and 330-350; these read ILMV…SSHH, WFTL…ILSY, FLVQ…QAWL, FLMT…YWFP, VGFI…FAVL, LNIS…GWGG, VSVA…VFFM, AGLV…GFLI, GCFI…FFYL, and VLLS…PVFI.

Belongs to the complex I subunit 2 family.

Its subcellular location is the mitochondrion inner membrane. The enzyme catalyses a ubiquinone + NADH + 5 H(+)(in) = a ubiquinol + NAD(+) + 4 H(+)(out). In terms of biological role, core subunit of the mitochondrial membrane respiratory chain NADH dehydrogenase (Complex I) that is believed to belong to the minimal assembly required for catalysis. Complex I functions in the transfer of electrons from NADH to the respiratory chain. The immediate electron acceptor for the enzyme is believed to be ubiquinone. The chain is NADH-ubiquinone oxidoreductase chain 2 (ND2) from Patiria pectinifera (Starfish).